Reading from the N-terminus, the 191-residue chain is Potassium-transporting ATPase KdpC subunit (191 aa).

Residues Ala7–Val27 form a helical membrane-spanning segment.

Belongs to the KdpC family. The system is composed of three essential subunits: KdpA, KdpB and KdpC.

It localises to the cell inner membrane. In terms of biological role, part of the high-affinity ATP-driven potassium transport (or Kdp) system, which catalyzes the hydrolysis of ATP coupled with the electrogenic transport of potassium into the cytoplasm. This subunit acts as a catalytic chaperone that increases the ATP-binding affinity of the ATP-hydrolyzing subunit KdpB by the formation of a transient KdpB/KdpC/ATP ternary complex. The sequence is that of Potassium-transporting ATPase KdpC subunit from Methylibium petroleiphilum (strain ATCC BAA-1232 / LMG 22953 / PM1).